We begin with the raw amino-acid sequence, 387 residues long: MCSSVTGKLWFLTDRRIREDYPQKEILRALKAKCCEEELDFRAVVMDEMVLTVEQGNLGLRISGELISAYPQVVVVRVPTPWVQSDSDITVLRHLEKMGCRLMNRPQAILNCVNKFWTFQELAGHGVPLPDTFSYGGHENFAKMIDEAEVLEFPMVVKNTRGHRGKAVFLARDKHHLADLSHLIRHEAPYLFQKYIKESHGRDVRVIVVGGRVVGTMLRCSTDGRMQSNCSLGGVGMMCSLSEQGKQLAIQVSNILGTDVCGIDLLMKDDGSFCVCEANANVGFIAFDKACNLDVAGIIADYAASLLPAGRLTRRMSLLSVVSTASETSEPELGPPASAAVDNMSASSSSVDSDPESTTEREMLTKLPGGLFNMNQLLANEIKLLVE.

The ATP-grasp domain maps to 119–304 (FQELAGHGVP…VAGIIADYAA (186 aa)). Residues K158, 193 to 203 (QKYIKESHGRD), and R219 contribute to the ATP site. Residues D264, E277, and N279 each contribute to the Mg(2+) site. Residues D264, E277, and N279 each contribute to the Mn(2+) site. Positions 325–361 (ASETSEPELGPPASAAVDNMSASSSSVDSDPESTTER) are disordered. Positions 337-352 (ASAAVDNMSASSSSVD) are enriched in low complexity.

It belongs to the RimK family. The cofactor is Mg(2+). It depends on Mn(2+) as a cofactor. As to expression, strongly expressed in brain and testis. Expressed in eyes, thymus, lung, kidney, skeletal muscle, spleen, skin and heart. Expressed in neurons of the neocortex, the gray matter and Purkinje cells.

It localises to the cytoplasm. It carries out the reaction citrate + L-glutamate + ATP = beta-citrylglutamate + ADP + phosphate + H(+). It catalyses the reaction N-acetyl-L-aspartate + L-glutamate + ATP = N-acetyl-L-aspartyl-L-glutamate + ADP + phosphate + H(+). Catalyzes the synthesis of beta-citryl-L-glutamate and N-acetyl-L-aspartyl-L-glutamate. Beta-citryl-L-glutamate is synthesized more efficiently than N-acetyl-L-aspartyl-L-glutamate. The polypeptide is Beta-citrylglutamate synthase B (Rimklb) (Mus musculus (Mouse)).